The chain runs to 366 residues: S-adenosylmethionine decarboxylase proenzyme 1 (366 aa).

Residues E9 and E12 contribute to the active site. Residue E68 coordinates substrate. The Schiff-base intermediate with substrate; via pyruvic acid role is filled by S69. Residue S69 is modified to Pyruvic acid (Ser); by autocatalysis. Catalysis depends on C83, which acts as the Proton donor; for catalytic activity. Catalysis depends on proton acceptor; for processing activity residues S233 and H246. Substrate is bound at residue E250.

It belongs to the eukaryotic AdoMetDC family. The cofactor is pyruvate. Is synthesized initially as an inactive proenzyme. Formation of the active enzyme involves a self-maturation process in which the active site pyruvoyl group is generated from an internal serine residue via an autocatalytic post-translational modification. Two non-identical subunits are generated from the proenzyme in this reaction, and the pyruvate is formed at the N-terminus of the alpha chain, which is derived from the carboxyl end of the proenzyme. The post-translation cleavage follows an unusual pathway, termed non-hydrolytic serinolysis, in which the side chain hydroxyl group of the serine supplies its oxygen atom to form the C-terminus of the beta chain, while the remainder of the serine residue undergoes an oxidative deamination to produce ammonia and the pyruvoyl group blocking the N-terminus of the alpha chain.

It carries out the reaction S-adenosyl-L-methionine + H(+) = S-adenosyl 3-(methylsulfanyl)propylamine + CO2. The protein operates within amine and polyamine biosynthesis; S-adenosylmethioninamine biosynthesis; S-adenosylmethioninamine from S-adenosyl-L-methionine: step 1/1. Essential for biosynthesis of the polyamines spermidine and spermine. Essential for polyamine homeostasis, and normal plant embryogenesis, growth and development. This Arabidopsis thaliana (Mouse-ear cress) protein is S-adenosylmethionine decarboxylase proenzyme 1.